Consider the following 108-residue polypeptide: Large ribosomal subunit protein uL24 (108 aa).

It belongs to the universal ribosomal protein uL24 family. Part of the 50S ribosomal subunit.

One of two assembly initiator proteins, it binds directly to the 5'-end of the 23S rRNA, where it nucleates assembly of the 50S subunit. In terms of biological role, one of the proteins that surrounds the polypeptide exit tunnel on the outside of the subunit. This chain is Large ribosomal subunit protein uL24, found in Moorella thermoacetica (strain ATCC 39073 / JCM 9320).